A 348-amino-acid polypeptide reads, in one-letter code: MNDPNSCVDNATVCSGASCVVPESNFNNILSVVLSTVLTILLALVMFSMGCNVEIKKFLGHIKRPWGICVGFLCQFGIMPLTGFILSVAFDILPLQAVVVLIIGCCPGGTASNILAYWVDGDMDLSVSMTTCSTLLALGMMPLCLLIYTKMWVDSGSIVIPYDNIGTSLVSLVVPVSIGMFVNHKWPQKAKIILKIGSIAGAILIVLIAVVGGILYQSAWIIAPKLWIIGTIFPVAGYSLGFLLARIAGLPWYRCRTVAFETGMQNTQLCSTIVQLSFTPEELNVVFTFPLIYSIFQLAFAAIFLGFYVAYKKCHGKNKAEIPESKENGTEPESSFYKANGGFQPDEK.

Residues 1-28 are Extracellular-facing; it reads MNDPNSCVDNATVCSGASCVVPESNFNN. An N-linked (GlcNAc...) asparagine glycan is attached at Asn10. Residues 29 to 49 form a helical membrane-spanning segment; that stretch reads ILSVVLSTVLTILLALVMFSM. Topologically, residues 50-82 are cytoplasmic; that stretch reads GCNVEIKKFLGHIKRPWGICVGFLCQFGIMPLT. A helical membrane pass occupies residues 83 to 103; sequence GFILSVAFDILPLQAVVVLII. Over 104-126 the chain is Extracellular; sequence GCCPGGTASNILAYWVDGDMDLS. Residues 127–147 form a helical membrane-spanning segment; that stretch reads VSMTTCSTLLALGMMPLCLLI. Over 148–157 the chain is Cytoplasmic; that stretch reads YTKMWVDSGS. Residues 158–178 traverse the membrane as a helical segment; it reads IVIPYDNIGTSLVSLVVPVSI. The Extracellular segment spans residues 179-195; that stretch reads GMFVNHKWPQKAKIILK. Residues 196–216 traverse the membrane as a helical segment; sequence IGSIAGAILIVLIAVVGGILY. Topologically, residues 217 to 224 are cytoplasmic; that stretch reads QSAWIIAP. A helical transmembrane segment spans residues 225–245; it reads KLWIIGTIFPVAGYSLGFLLA. Over 246–284 the chain is Extracellular; that stretch reads RIAGLPWYRCRTVAFETGMQNTQLCSTIVQLSFTPEELN. A helical transmembrane segment spans residues 285 to 305; sequence VVFTFPLIYSIFQLAFAAIFL. Residues 306-348 lie on the Cytoplasmic side of the membrane; it reads GFYVAYKKCHGKNKAEIPESKENGTEPESSFYKANGGFQPDEK. A compositionally biased stretch (basic and acidic residues) spans 320 to 329; sequence AEIPESKENG. The tract at residues 320 to 348 is disordered; sequence AEIPESKENGTEPESSFYKANGGFQPDEK. A Phosphoserine modification is found at Ser335.

Belongs to the bile acid:sodium symporter (BASS) (TC 2.A.28) family. Monomer and homodimer. As to expression, mainly expressed in ileum and kidney, lower expression in cecum.

It localises to the membrane. The enzyme catalyses taurocholate(out) + 2 Na(+)(out) = taurocholate(in) + 2 Na(+)(in). It carries out the reaction cholate(out) + 2 Na(+)(out) = cholate(in) + 2 Na(+)(in). It catalyses the reaction taurochenodeoxycholate(out) + 2 Na(+)(out) = taurochenodeoxycholate(in) + 2 Na(+)(in). The catalysed reaction is tauroursodeoxycholate(out) + 2 Na(+)(out) = tauroursodeoxycholate(in) + 2 Na(+)(in). The enzyme catalyses glycocholate(out) + 2 Na(+)(out) = glycocholate(in) + 2 Na(+)(in). It carries out the reaction tauronorcholate(out) + 2 Na(+)(out) = tauronorcholate(in) + 2 Na(+)(in). It catalyses the reaction tauroallocholate(out) + 2 Na(+)(out) = tauroallocholate(in) + 2 Na(+)(in). The catalysed reaction is taurodeoxycholate(out) + 2 Na(+)(out) = taurodeoxycholate(in) + 2 Na(+)(in). The enzyme catalyses tauro-beta-muricholate(out) + 2 Na(+)(out) = tauro-beta-muricholate(in) + 2 Na(+)(in). Functionally, plays a critical role in the sodium-dependent reabsorption of bile acids from the lumen of the small intestine. Transports various bile acids, unconjugated or conjugated, such as cholate and taurocholate. Also responsible for bile acid transport in the renal proximal tubules, a salvage mechanism that helps conserve bile acids. Works collaboratively with the Na(+)-taurocholate cotransporting polypeptide (NTCP), the organic solute transporter (OST), and the bile salt export pump (BSEP), to ensure efficacious biological recycling of bile acids during enterohepatic circulation. The protein is Ileal sodium/bile acid cotransporter (SLC10A2) of Homo sapiens (Human).